A 397-amino-acid polypeptide reads, in one-letter code: Putative F-box protein At2g04810 (397 aa).

One can recognise an F-box domain in the interval 20-68; the sequence is SDWSKLCPDVLRKIYETLRSPVDSHRAKIVCSNWYSVWKTCVKRPLCPL.

The polypeptide is Putative F-box protein At2g04810 (Arabidopsis thaliana (Mouse-ear cress)).